Consider the following 241-residue polypeptide: 1-(5-phosphoribosyl)-5-[(5-phosphoribosylamino)methylideneamino] imidazole-4-carboxamide isomerase (241 aa).

Asp10 functions as the Proton acceptor in the catalytic mechanism. Asp129 (proton donor) is an active-site residue.

It belongs to the HisA/HisF family.

The protein resides in the cytoplasm. It carries out the reaction 1-(5-phospho-beta-D-ribosyl)-5-[(5-phospho-beta-D-ribosylamino)methylideneamino]imidazole-4-carboxamide = 5-[(5-phospho-1-deoxy-D-ribulos-1-ylimino)methylamino]-1-(5-phospho-beta-D-ribosyl)imidazole-4-carboxamide. Its pathway is amino-acid biosynthesis; L-histidine biosynthesis; L-histidine from 5-phospho-alpha-D-ribose 1-diphosphate: step 4/9. The sequence is that of 1-(5-phosphoribosyl)-5-[(5-phosphoribosylamino)methylideneamino] imidazole-4-carboxamide isomerase from Salinispora tropica (strain ATCC BAA-916 / DSM 44818 / JCM 13857 / NBRC 105044 / CNB-440).